A 434-amino-acid chain; its full sequence is Asparagine--tRNA ligase (434 aa).

Belongs to the class-II aminoacyl-tRNA synthetase family.

It localises to the cytoplasm. The catalysed reaction is tRNA(Asn) + L-asparagine + ATP = L-asparaginyl-tRNA(Asn) + AMP + diphosphate + H(+). This Pyrococcus furiosus (strain ATCC 43587 / DSM 3638 / JCM 8422 / Vc1) protein is Asparagine--tRNA ligase (asnS).